The following is a 162-amino-acid chain: Phosphopantetheine adenylyltransferase (162 aa).

A substrate-binding site is contributed by Thr-9. Residues 9-10 (TF) and His-17 each bind ATP. Lys-41, Leu-76, and Arg-90 together coordinate substrate. Residues 91–93 (GLR), Glu-101, and 126–132 (HQAIASR) contribute to the ATP site.

It belongs to the bacterial CoaD family. In terms of assembly, homohexamer. Mg(2+) serves as cofactor.

Its subcellular location is the cytoplasm. The enzyme catalyses (R)-4'-phosphopantetheine + ATP + H(+) = 3'-dephospho-CoA + diphosphate. The protein operates within cofactor biosynthesis; coenzyme A biosynthesis; CoA from (R)-pantothenate: step 4/5. Its function is as follows. Reversibly transfers an adenylyl group from ATP to 4'-phosphopantetheine, yielding dephospho-CoA (dPCoA) and pyrophosphate. This Caulobacter sp. (strain K31) protein is Phosphopantetheine adenylyltransferase.